We begin with the raw amino-acid sequence, 1427 residues long: Lysophospholipase NTE1 (1427 aa).

Over 1-60 the chain is Cytoplasmic; that stretch reads MDSLHVSSTSVLVDVVEAVETATSLVVDTAEAVATEQATPTAVISNALARSAYAAHTSLS. Residues 61–81 traverse the membrane as a helical segment; the sequence is YLAWAFGLWFLRLIGWVCYGI. Residues 82 to 96 are Lumenal-facing; sequence PTYVLGLLGRTINIS. The helical transmembrane segment at 97–117 threads the bilayer; it reads LQFSSLLLILIALVTVVVAVV. Over 118 to 1427 the chain is Cytoplasmic; it reads RYKYLTVYSR…KRTIARRNSI (1310 aa). The span at 281–296 shows a compositional bias: polar residues; that stretch reads PMTSASDVPNMSLSSD. The disordered stretch occupies residues 281–315; it reads PMTSASDVPNMSLSSDGSDDLQKGEPQFGEPRLSE. A nucleoside 3',5'-cyclic phosphate-binding positions include 615-735 and 731-870; these read LMAA…LTKV and SLTK…VASR. The segment at 787 to 807 is disordered; that stretch reads GIVGGESGDAKDGKSHRKNLT. One can recognise a PNPLA domain in the interval 1124–1288; sequence LVLGGGGARG…VDNLPVSEMK (165 aa). A GXGXXG motif is present at residues 1128–1133; that stretch reads GGGARG. Residues 1155–1159 carry the GXSXG motif; sequence GTSIG. S1157 (nucleophile) is an active-site residue. Residue D1275 is the Proton acceptor of the active site. The DGA/G motif lies at 1275 to 1277; the sequence is DGG.

This sequence belongs to the NTE family.

The protein localises to the endoplasmic reticulum membrane. The enzyme catalyses a 1-acyl-sn-glycero-3-phosphocholine + H2O = sn-glycerol 3-phosphocholine + a fatty acid + H(+). Inhibited by organophosphorus esters. Intracellular phospholipase B that catalyzes the double deacylation of phosphatidylcholine (PC) to glycerophosphocholine (GroPCho). Plays an important role in membrane lipid homeostasis. Responsible for the rapid PC turnover in response to inositol, elevated temperatures, or when choline is present in the growth medium. This chain is Lysophospholipase NTE1 (NTE1), found in Yarrowia lipolytica (strain CLIB 122 / E 150) (Yeast).